We begin with the raw amino-acid sequence, 338 residues long: Nicotinate-nucleotide--dimethylbenzimidazole phosphoribosyltransferase (338 aa).

The active-site Proton acceptor is Glu305.

Belongs to the CobT family.

It carries out the reaction 5,6-dimethylbenzimidazole + nicotinate beta-D-ribonucleotide = alpha-ribazole 5'-phosphate + nicotinate + H(+). The protein operates within nucleoside biosynthesis; alpha-ribazole biosynthesis; alpha-ribazole from 5,6-dimethylbenzimidazole: step 1/2. Functionally, catalyzes the synthesis of alpha-ribazole-5'-phosphate from nicotinate mononucleotide (NAMN) and 5,6-dimethylbenzimidazole (DMB). The sequence is that of Nicotinate-nucleotide--dimethylbenzimidazole phosphoribosyltransferase from Rhizobium etli (strain CIAT 652).